The following is a 465-amino-acid chain: GTPase Der (465 aa).

EngA-type G domains are found at residues 3-167 (PLVA…PEEG) and 179-352 (VRIA…ASAT). GTP contacts are provided by residues 9–16 (GRPNVGKS), 57–61 (DTGGI), 119–122 (NKID), 185–192 (GRPNVGKS), 232–236 (DTAGL), and 297–300 (NKWD). In terms of domain architecture, KH-like spans 353–437 (HEFSTSEVNQ…PVCFIFREGA (85 aa)).

It belongs to the TRAFAC class TrmE-Era-EngA-EngB-Septin-like GTPase superfamily. EngA (Der) GTPase family. Associates with the 50S ribosomal subunit.

Functionally, GTPase that plays an essential role in the late steps of ribosome biogenesis. The sequence is that of GTPase Der from Xanthomonas oryzae pv. oryzae (strain MAFF 311018).